The sequence spans 152 residues: Deoxyuridine 5'-triphosphate nucleotidohydrolase (152 aa).

Residues 71-73 (RSG), Asn84, 88-90 (LID), and Lys98 each bind substrate.

Belongs to the dUTPase family. The cofactor is Mg(2+).

It catalyses the reaction dUTP + H2O = dUMP + diphosphate + H(+). It functions in the pathway pyrimidine metabolism; dUMP biosynthesis; dUMP from dCTP (dUTP route): step 2/2. Its function is as follows. This enzyme is involved in nucleotide metabolism: it produces dUMP, the immediate precursor of thymidine nucleotides and it decreases the intracellular concentration of dUTP so that uracil cannot be incorporated into DNA. The polypeptide is Deoxyuridine 5'-triphosphate nucleotidohydrolase (Legionella pneumophila (strain Paris)).